Here is a 332-residue protein sequence, read N- to C-terminus: Ketol-acid reductoisomerase (NAD(+)) (332 aa).

Residues 1–186 (MEILHDEDVD…HWTKAGILEC (186 aa)) form the KARI N-terminal Rossmann domain. NAD(+) contacts are provided by residues 24-27 (YGAQ), Glu-46, Asn-55, Ser-57, and 87-90 (DEVQ). Residue His-112 is part of the active site. Gly-138 lines the NAD(+) pocket. The 146-residue stretch at 187–332 (TFEQETYEDL…AEIRKLFAQK (146 aa)) folds into the KARI C-terminal knotted domain. Mg(2+)-binding residues include Asp-195, Glu-199, Glu-231, and Glu-235. Residue Ser-256 participates in substrate binding.

Belongs to the ketol-acid reductoisomerase family. As to quaternary structure, homodimer. The cofactor is Mg(2+).

It carries out the reaction (2R)-2,3-dihydroxy-3-methylbutanoate + NAD(+) = (2S)-2-acetolactate + NADH + H(+). The protein operates within amino-acid biosynthesis; L-isoleucine biosynthesis; L-isoleucine from 2-oxobutanoate: step 2/4. It functions in the pathway amino-acid biosynthesis; L-valine biosynthesis; L-valine from pyruvate: step 2/4. In terms of biological role, involved in the biosynthesis of branched-chain amino acids (BCAA). Catalyzes an alkyl-migration followed by a ketol-acid reduction of (S)-2-acetolactate (S2AL) to yield (R)-2,3-dihydroxy-isovalerate. In the isomerase reaction, S2AL is rearranged via a Mg-dependent methyl migration to produce 3-hydroxy-3-methyl-2-ketobutyrate (HMKB). In the reductase reaction, this 2-ketoacid undergoes a metal-dependent reduction by NADH to yield (R)-2,3-dihydroxy-isovalerate. This Uncultured archaeon GZfos26G2 protein is Ketol-acid reductoisomerase (NAD(+)).